Reading from the N-terminus, the 144-residue chain is Actin-associated protein FAM107A (144 aa).

Residues 66-112 adopt a coiled-coil conformation; sequence ELQRVLEHRRRNQLIKKKKEELEAKRLQCPFEQELLRRQQRLNQLEK. The short motif at 74–84 is the Nuclear localization signal element; the sequence is RRRNQLIKKKK. The disordered stretch occupies residues 105 to 124; the sequence is QRLNQLEKPPEKEEDHAPEF. A compositionally biased stretch (basic and acidic residues) spans 112-124; that stretch reads KPPEKEEDHAPEF.

The protein belongs to the FAM107 family. As to quaternary structure, interacts with ACTB. Interacts with COMMD1; this interaction stabilizes COMMD1 in the nucleus. Interacts with MAP1A. Interacts with PRDX1. Interacts with F-actin. As to expression, widely expressed. Expressed in neurons. Expressed in malignant glial tumors. Expression is reduced or absent in a number of cancer cell lines.

It is found in the nucleus. The protein resides in the cytoplasm. The protein localises to the cytoskeleton. It localises to the stress fiber. Its subcellular location is the cell junction. It is found in the focal adhesion. The protein resides in the cell projection. The protein localises to the ruffle membrane. It localises to the synapse. Its function is as follows. Stress-inducible actin-binding protein that plays a role in synaptic and cognitive functions by modulating actin filamentous (F-actin) dynamics. Mediates polymerization of globular actin to F-actin. Also binds to, stabilizes and bundles F-actin. Involved in synaptic function by regulating neurite outgrowth in an actin-dependent manner and for the acquisition of hippocampus-dependent cognitive function, such as learning and long-term memory. Plays a role in the actin and microtubule cytoskeleton organization; negatively regulates focal adhesion (FA) assembly promoting malignant glial cell migration in an actin-, microtubule- and MAP1A-dependent manner. Also involved in neuroblastoma G1/S phase cell cycle progression and cell proliferation inhibition by stimulating ubiquitination of NF-kappa-B subunit RELA and NF-kappa-B degradation in a COMMD1- and actin-dependent manner. May play a role in tumor development. The polypeptide is Actin-associated protein FAM107A (Homo sapiens (Human)).